The chain runs to 918 residues: Signal transduction histidine-protein kinase BarA (918 aa).

Residues 1 to 10 (MTNYSLRARM) lie on the Cytoplasmic side of the membrane. The chain crosses the membrane as a helical span at residues 11-31 (MILILAPTVLIGLLLSIFFVV). At 32–175 (HRYNDLQRQL…LKSVRLQQYK (144 aa)) the chain is on the periplasmic side. A helical membrane pass occupies residues 176–196 (EIFISCVMMLFCIGIALIFGW). Topologically, residues 197–918 (RLMRDVTGPI…VAREASKILG (722 aa)) are cytoplasmic. Residues 200–252 (RDVTGPIRNMVNTVDRIRRGQLDSRVEGFMLGELDMLKNGINSMAMSLAAYHE) enclose the HAMP domain. The Histidine kinase domain maps to 299–520 (NMSHELRTPL…TFWFHINLDL (222 aa)). Residue histidine 302 is modified to Phosphohistidine; by autocatalysis. The 117-residue stretch at 669–785 (TVMAVDDNPA…RLHNLLLRYK (117 aa)) folds into the Response regulatory domain. Aspartate 718 is modified (4-aspartylphosphate). The HPt domain maps to 822 to 918 (KTDLARDMLQ…VAREASKILG (97 aa)). Phosphohistidine is present on histidine 861.

Activation requires a sequential transfer of a phosphate group from a His in the primary transmitter domain, to an Asp in the receiver domain and to a His in the secondary transmitter domain.

It is found in the cell inner membrane. It catalyses the reaction ATP + protein L-histidine = ADP + protein N-phospho-L-histidine.. Its function is as follows. Member of the two-component regulatory system UvrY/BarA involved in the regulation of carbon metabolism via the CsrA/CsrB regulatory system. Phosphorylates UvrY, probably via a four-step phosphorelay. The chain is Signal transduction histidine-protein kinase BarA (barA) from Shigella flexneri.